The primary structure comprises 70 residues: Brevinin-ALb (70 aa).

The N-terminal stretch at 1 to 22 is a signal peptide; sequence MFTLKKSLLLLFFLGTINLSLC. A propeptide spanning residues 23-46 is cleaved from the precursor; it reads EQERDADEEERRDDDEMDVEVEKR. A disulfide bond links Cys-64 and Cys-70.

In terms of tissue distribution, expressed by the skin glands.

It localises to the secreted. In terms of biological role, antimicrobial peptide with activity against Gram-positive and Gram-negative bacteria and against fungi. Has been tested against S.aureus (MIC=5.5 ug/mL), E.coli (MIC=6.5 ug/mL), B.dysenteriae (MIC=2.2 ug/mL), and C.albicans (MIC=7.5 ug/mL). Can regulate or mediate antimicrobial response by stimulating mast cell degranulation. Induces histamine release. Shows cytotoxicity toward solid tumor cell line HepG2. Also shows a potent hemolytic activity (LD(50)=5 ug/ml). In Amolops loloensis (Lolokou Sucker Frog), this protein is Brevinin-ALb.